The sequence spans 281 residues: tRNA pseudouridine synthase A (281 aa).

Asp55 functions as the Nucleophile in the catalytic mechanism. Tyr110 serves as a coordination point for substrate.

The protein belongs to the tRNA pseudouridine synthase TruA family.

It catalyses the reaction uridine(38/39/40) in tRNA = pseudouridine(38/39/40) in tRNA. Its function is as follows. Formation of pseudouridine at positions 38, 39 and 40 in the anticodon stem and loop of transfer RNAs. The sequence is that of tRNA pseudouridine synthase A from Methanocorpusculum labreanum (strain ATCC 43576 / DSM 4855 / Z).